The following is a 446-amino-acid chain: D(1A) dopamine receptor (446 aa).

Residues 1-23 are Extracellular-facing; the sequence is MRTLNTSTMEGTGLVAERDFSFR. N5 carries N-linked (GlcNAc...) asparagine glycosylation. The helical transmembrane segment at 24 to 49 threads the bilayer; the sequence is ILTACFLSLLILSTLLGNTLVCAAVI. The Cytoplasmic portion of the chain corresponds to 50–60; it reads RFRHLRSKVTN. Residues 61–87 traverse the membrane as a helical segment; it reads FFVISLAVSDLLVAVLVMPWKAVAEIA. Over 88–96 the chain is Extracellular; that stretch reads GFWPFGSFC. A disulfide bond links C96 and C186. The chain crosses the membrane as a helical span at residues 97–119; the sequence is NIWVAFDIMCSTASILNLCVISV. Residues 120–138 lie on the Cytoplasmic side of the membrane; that stretch reads DRYWAISSPFRYERKMTPK. A helical membrane pass occupies residues 139–163; it reads AAFILISVAWTLSVLISFIPVQLSW. At 164 to 192 the chain is on the extracellular side; sequence HKAKPTGPSEGNATSLGKTINNCDSSLSR. N-linked (GlcNAc...) asparagine glycosylation occurs at N175. Residues 193–218 form a helical membrane-spanning segment; it reads TYAISSSLISFYIPVAIMIVTYTRIY. Topologically, residues 219–272 are cytoplasmic; the sequence is RIAQKQIRRISALERAAVHAKNCQTTTGNGNPMECSQPESSFKMSFKRETKVLK. Residues 273–299 form a helical membrane-spanning segment; that stretch reads TLSVIMGVFVCCWLPFFILNCMVPFCG. At 300-312 the chain is on the extracellular side; that stretch reads SGETKPFCIDSIT. Residues 313-337 traverse the membrane as a helical segment; that stretch reads FDVFVWFGWANSSLNPIIYAFNADF. The Cytoplasmic segment spans residues 338–446; the sequence is RKAFSTLLGC…PITQNGQHPT (109 aa). Residues C347 and C351 are each lipidated (S-palmitoyl cysteine).

This sequence belongs to the G-protein coupled receptor 1 family. As to quaternary structure, interacts with DNAJC14 via its C-terminus. Interacts with DRD2. Interacts with DORIP1.

Its subcellular location is the cell membrane. It localises to the endoplasmic reticulum membrane. It is found in the cell projection. The protein resides in the cilium membrane. The protein localises to the dendrite. Its subcellular location is the dendritic spine. Functionally, dopamine receptor whose activity is mediated by G proteins which activate adenylyl cyclase. The polypeptide is D(1A) dopamine receptor (DRD1) (Bos taurus (Bovine)).